Consider the following 174-residue polypeptide: Adenine phosphoribosyltransferase (174 aa).

The protein belongs to the purine/pyrimidine phosphoribosyltransferase family. Homodimer.

The protein resides in the cytoplasm. The enzyme catalyses AMP + diphosphate = 5-phospho-alpha-D-ribose 1-diphosphate + adenine. It functions in the pathway purine metabolism; AMP biosynthesis via salvage pathway; AMP from adenine: step 1/1. In terms of biological role, catalyzes a salvage reaction resulting in the formation of AMP, that is energically less costly than de novo synthesis. The polypeptide is Adenine phosphoribosyltransferase (Nitrosomonas europaea (strain ATCC 19718 / CIP 103999 / KCTC 2705 / NBRC 14298)).